The chain runs to 246 residues: Transcription factor A, mitochondrial (246 aa).

A mitochondrion-targeting transit peptide spans 1–42 (MALLRGVWGVLSALGKSGADLCAVCGSRLRSPFSFAYVPRWF). A DNA-binding region (HMG box 1) is located at residues 50 to 118 (PKKPMTSYVR…VYKEEVNRIQ (69 aa)). A phosphoserine; by PKA mark is found at Ser-56 and Ser-61. Thr-122 bears the Phosphothreonine mark. A DNA-binding region (HMG box 2) is located at residues 155-219 (PKRPRSAYNI…RYYNEMKSWE (65 aa)). Ser-160 carries the post-translational modification Phosphoserine; by PKA. Ser-193 and Ser-195 each carry phosphoserine.

In terms of assembly, monomer; binds DNA as a monomer. Homodimer. Component of the mitochondrial transcription initiation complex, composed at least of TFB2M, TFAM and POLRMT. In this complex TFAM recruits POLRMT to the promoter whereas TFB2M induces structural changes in POLRMT to enable promoter opening and trapping of the DNA non-template strand. Upon metabolic stress, forms a complex composed of FOXO3, SIRT3, TFAM and POLRMT. Interacts with TFB1M and TFB2M. Interacts with CLPX; this enhances DNA-binding. Phosphorylation by PKA within the HMG box 1 impairs DNA binding and promotes degradation by the AAA+ Lon protease.

It localises to the mitochondrion. The protein localises to the mitochondrion matrix. The protein resides in the mitochondrion nucleoid. Functionally, binds to the mitochondrial light strand promoter and functions in mitochondrial transcription regulation. Component of the mitochondrial transcription initiation complex, composed at least of TFB2M, TFAM and POLRMT that is required for basal transcription of mitochondrial DNA. In this complex, TFAM recruits POLRMT to a specific promoter whereas TFB2M induces structural changes in POLRMT to enable promoter opening and trapping of the DNA non-template strand. Required for accurate and efficient promoter recognition by the mitochondrial RNA polymerase. Promotes transcription initiation from the HSP1 and the light strand promoter by binding immediately upstream of transcriptional start sites. Is able to unwind DNA. Bends the mitochondrial light strand promoter DNA into a U-turn shape via its HMG boxes. Required for maintenance of normal levels of mitochondrial DNA. May play a role in organizing and compacting mitochondrial DNA. This is Transcription factor A, mitochondrial from Sus scrofa (Pig).